A 747-amino-acid chain; its full sequence is Catalase-peroxidase (747 aa).

The N-terminal stretch at methionine 1 to alanine 27 is a signal peptide. Residues tryptophan 116–tyrosine 238 constitute a cross-link (tryptophyl-tyrosyl-methioninium (Trp-Tyr) (with M-264)). Histidine 117 functions as the Proton acceptor in the catalytic mechanism. The tryptophyl-tyrosyl-methioninium (Tyr-Met) (with W-116) cross-link spans tyrosine 238–methionine 264. Histidine 279 contacts heme b.

Belongs to the peroxidase family. Peroxidase/catalase subfamily. Homodimer or homotetramer. Heme b is required as a cofactor. In terms of processing, formation of the three residue Trp-Tyr-Met cross-link is important for the catalase, but not the peroxidase activity of the enzyme.

It carries out the reaction H2O2 + AH2 = A + 2 H2O. It catalyses the reaction 2 H2O2 = O2 + 2 H2O. Its function is as follows. Bifunctional enzyme with both catalase and broad-spectrum peroxidase activity. The protein is Catalase-peroxidase of Novosphingobium aromaticivorans (strain ATCC 700278 / DSM 12444 / CCUG 56034 / CIP 105152 / NBRC 16084 / F199).